We begin with the raw amino-acid sequence, 446 residues long: Trigger factor (446 aa).

A PPIase FKBP-type domain is found at 163–248 (GDRLVIDFEG…VKEIKKKNLL (86 aa)).

It belongs to the FKBP-type PPIase family. Tig subfamily.

The protein localises to the cytoplasm. It carries out the reaction [protein]-peptidylproline (omega=180) = [protein]-peptidylproline (omega=0). In terms of biological role, involved in protein export. Acts as a chaperone by maintaining the newly synthesized protein in an open conformation. Functions as a peptidyl-prolyl cis-trans isomerase. This Natranaerobius thermophilus (strain ATCC BAA-1301 / DSM 18059 / JW/NM-WN-LF) protein is Trigger factor.